A 938-amino-acid polypeptide reads, in one-letter code: ATP-dependent RNA helicase DDX42 (938 aa).

Residues 1–18 (MNWNKGGPGTKRGFGFGG) are compositionally biased toward gly residues. The disordered stretch occupies residues 1–114 (MNWNKGGPGT…KPVDSDSDDD (114 aa)). N6-acetyllysine is present on Lys5. The residue at position 12 (Arg12) is an Omega-N-methylarginine. A compositionally biased stretch (low complexity) spans 35-52 (SHSAFGATSSSSGFGKSA). Position 58 is a phosphoserine (Ser58). A compositionally biased stretch (acidic residues) spans 70–84 (DEENAYFEDEEEDSS). 4 positions are modified to phosphoserine: Ser96, Ser104, Ser109, and Ser111. Residues 116 to 157 (LEAFMAEVEDQAARDMKRLEEKDKERKNVKGIRDDIEEEDDQ) are a coiled coil. The interval 182-203 (EYDSDGNPIAPTKKIIDPLPPI) is disordered. Ser185 carries the post-translational modification Phosphoserine. The Q motif motif lies at 253–281 (SSFAHFGFDEQLMHQIRKSEYTQPTPIQC). Residues 284–459 (VPVALSGRDM…RDILIDPIRV (176 aa)) form the Helicase ATP-binding domain. ATP is bound at residue 297–304 (AKTGSGKT). Residues 407-410 (DEAD) carry the DEAD box motif. Positions 487–632 (WLTRRLVEFT…HVSKELLDLA (146 aa)) constitute a Helicase C-terminal domain. 2 stretches are compositionally biased toward polar residues: residues 737–757 (LNSV…SPVT) and 786–798 (GVNN…NSRE). Positions 737–938 (LNSVPTNSAQ…PKRKKSRWDS (202 aa)) are disordered. A necessary for interaction with TP53BP2 region spans residues 738 to 833 (NSVPTNSAQQ…TGNRHSDSPR (96 aa)). At Ser754 the chain carries Phosphoserine. Residues 820–920 (SHGETGNRHS…KVDSKTDKTA (101 aa)) are compositionally biased toward basic and acidic residues. A Glycyl lysine isopeptide (Lys-Gly) (interchain with G-Cter in SUMO2) cross-link involves residue Lys899.

The protein belongs to the DEAD box helicase family. DDX42 subfamily. Transient component of the SF3B subcomplex of the 17S U2 SnRNP complex. Interacts (via the C-terminus) with TP53BP2; the interaction is not inhibitied by TP53BP2 ubiquitination and is independent of p53/TP53. In terms of tissue distribution, expressed in several cell lines (at protein level). Expressed in liver, lung, tonsil, thymus, muscle and pancreatic islets.

The protein localises to the cytoplasm. It is found in the nucleus. Its subcellular location is the cajal body. It localises to the nucleus speckle. It catalyses the reaction ATP + H2O = ADP + phosphate + H(+). ATP-dependent RNA helicase that binds to partially double-stranded RNAs (dsRNAs) in order to unwind RNA secondary structures. Unwinding is promoted in the presence of single-strand binding proteins. Also mediates RNA duplex formation thereby displacing the single-strand RNA binding protein. ATP and ADP modulate its activity: ATP binding and hydrolysis by DDX42 triggers RNA strand separation, whereas the ADP-bound form of the protein triggers annealing of complementary RNA strands. Required for assembly of the 17S U2 SnRNP complex of the spliceosome, a large ribonucleoprotein complex that removes introns from transcribed pre-mRNAs: DDX42 associates transiently with the SF3B subcomplex of the 17S U2 SnRNP complex and is released after fulfilling its role in the assembly of 17S U2 SnRNP. Involved in the survival of cells by interacting with TP53BP2 and thereby counteracting the apoptosis-stimulating activity of TP53BP2. Relocalizes TP53BP2 to the cytoplasm. The chain is ATP-dependent RNA helicase DDX42 from Homo sapiens (Human).